The primary structure comprises 517 residues: Protein ERGIC-53 (517 aa).

An N-terminal signal peptide occupies residues Met1–Ser30. Topologically, residues Asp31–Ser484 are lumenal. In terms of domain architecture, L-type lectin-like spans Arg52–Leu275. Residues Ser96 and Asp129 each coordinate a carbohydrate. Residues Asp160, Phe162, and Asn164 each coordinate Ca(2+). Asn164 and His186 together coordinate a carbohydrate. Residue Asp189 participates in Ca(2+) binding. The cysteines at positions 198 and 238 are disulfide-linked. An a carbohydrate-binding site is contributed by Gly259–Leu261. Ser433 carries the post-translational modification Phosphoserine. The chain crosses the membrane as a helical span at residues Thr485–Tyr505. At Arg506–Phe517 the chain is on the cytoplasmic side. The interval Arg506 to Phe517 is mediates interaction with RAB3GAP1, RAB3GAP2 and UBXN6. The ER export motif motif lies at Phe516 to Phe517.

As to quaternary structure, exists both as a covalent disulfide-linked homohexamer, and a complex of three disulfide-linked dimers non-covalently kept together. Interacts with MCFD2. May interact with TMEM115. Interacts with RAB3GAP1 and RAB3GAP2. Interacts with UBXN6. Interacts with SERPINA1/alpha1-antitrypsin. Interacts with BET1.

The protein resides in the endoplasmic reticulum-Golgi intermediate compartment membrane. It is found in the golgi apparatus membrane. It localises to the endoplasmic reticulum membrane. In terms of biological role, mannose-specific lectin. May recognize sugar residues of glycoproteins, glycolipids, or glycosylphosphatidyl inositol anchors and may be involved in the sorting or recycling of proteins, lipids, or both. The LMAN1-MCFD2 complex forms a specific cargo receptor for the ER-to-Golgi transport of selected proteins. This Mus musculus (Mouse) protein is Protein ERGIC-53 (Lman1).